The chain runs to 1936 residues: Probable inactive serine/threonine-protein kinase DDB_G0278909 (1936 aa).

LRR repeat units lie at residues 61–82 (LLEK…GHLN), 83–103 (KLKR…QGLS), 104–125 (SLVY…SDCK), 126–147 (KLIN…DHFS), and 151–173 (SLKV…QKKI). The LRRCT domain maps to 191-230 (NLIEKKYEEFRLFVINELPKLKYLNWVLISKDERTKASKL). Composition is skewed to low complexity over residues 253-285 (NNPN…SSNN) and 293-302 (TTTSVSVGSS). Disordered stretches follow at residues 253–319 (NNPN…STSF) and 347–386 (KERE…IDET). Residues 310-319 (SSPNSRSTSF) show a composition bias toward polar residues. HEAT repeat units follow at residues 325–368 (SVGA…SSSS) and 439–476 (QETE…DLLY). The segment covering 353-373 (QSTSPSSSSLSISSSSQNNNS) has biased composition (low complexity). Residues 516 to 526 (LSSSSSSSSTT) show a composition bias toward low complexity. 5 disordered regions span residues 516–544 (LSSS…QLDL), 599–620 (NSTL…SPKL), 660–689 (IDQN…INNN), 702–756 (QSIL…PIMK), and 769–809 (QDQP…HFKS). A compositionally biased stretch (pro residues) spans 527–538 (PPQPQLPPPPPQ). HEAT repeat units follow at residues 574-614 (PVVS…TTPP) and 617-654 (SPKL…GSAK). Residues 600-612 (STLSTTPPLSSTT) show a composition bias toward low complexity. The segment covering 660-673 (IDQNTATTPSTPSK) has biased composition (polar residues). Low complexity predominate over residues 736–756 (STTTNTTPTSTPGSPSKPIMK). Positions 774–785 (IVSPPQPQPQPP) are enriched in pro residues. Over residues 786–805 (IVQQKQQQQQQQQQQQQPQQ) the composition is skewed to low complexity. In terms of domain architecture, Protein kinase spans 961–1241 (IQVGSRLGLG…ISKILSQPFQ (281 aa)). ATP is bound by residues 967–975 (LGLGSFGDC) and lysine 988. 2 disordered regions span residues 1050-1075 (SHNN…NNNN) and 1261-1308 (NTTI…VKHQ). Low complexity-rich tracts occupy residues 1052–1075 (NNNN…NNNN), 1266–1282 (SSSS…VGSV), and 1291–1302 (NNSNTGSTGSTS). HEAT repeat units follow at residues 1317–1356 (RKMI…ALKA), 1512–1549 (FIEE…NQNC), 1553–1590 (LHNA…DIEF), 1598–1635 (NCLS…SICS), 1690–1728 (QSRL…LFSS), 1739–1775 (SMSV…VNNK), 1780–1817 (IHMM…SQEC), 1821–1858 (FLQK…DDSA), and 1863–1900 (RDNQ…KQIN).

The chain is Probable inactive serine/threonine-protein kinase DDB_G0278909 from Dictyostelium discoideum (Social amoeba).